The sequence spans 492 residues: B3 domain-containing protein REM3 (492 aa).

Positions asparagine 12–serine 104 form a DNA-binding region, TF-B3 1. Residues phenylalanine 105–aspartate 116 show a composition bias toward low complexity. The segment at phenylalanine 105–lysine 134 is disordered. Over residues tyrosine 117 to serine 131 the composition is skewed to acidic residues. 2 DNA-binding regions (TF-B3) span residues tyrosine 154–lysine 250 and phenylalanine 286–glutamate 382. Over residues isoleucine 385–glycine 395 the composition is skewed to basic and acidic residues. The segment at isoleucine 385–leucine 427 is disordered.

It localises to the nucleus. The protein is B3 domain-containing protein REM3 (REM3) of Arabidopsis thaliana (Mouse-ear cress).